We begin with the raw amino-acid sequence, 630 residues long: Tyrosinase (630 aa).

6 residues coordinate Cu cation: His-69, His-92, His-101, His-317, His-321, and His-360. Residues 90 to 92 constitute a cross-link (2'-(S-cysteinyl)-histidine (Cys-His)); the sequence is CVH.

This sequence belongs to the tyrosinase family. It depends on Cu(2+) as a cofactor.

It catalyses the reaction 2 L-dopa + O2 = 2 L-dopaquinone + 2 H2O. The catalysed reaction is L-tyrosine + O2 = L-dopaquinone + H2O. Its function is as follows. This is a copper-containing oxidase that functions in the formation of pigments such as melanins and other polyphenolic compounds. The sequence is that of Tyrosinase (tyr1) from Aspergillus fumigatus (strain ATCC MYA-4609 / CBS 101355 / FGSC A1100 / Af293) (Neosartorya fumigata).